The following is a 173-amino-acid chain: MELLIAGKVLGSHNLKGEVKVISDLDNIEVLVGNKVILELADSQQKLLTIKKIEHLVANKWIFSFEEIKNKQDTIEIRNANIKVRRDIVGIGEDEYLVSDMIGFKVYDVKGDEYLGEITEIMDTAAHDIYVIESEEFETMIPDVDVFIKNIDFENRKMLVDTIEGMKESKVKK.

Residues 93-166 (EDEYLVSDMI…KMLVDTIEGM (74 aa)) enclose the PRC barrel domain.

The protein belongs to the RimM family. As to quaternary structure, binds ribosomal protein uS19.

Its subcellular location is the cytoplasm. Functionally, an accessory protein needed during the final step in the assembly of 30S ribosomal subunit, possibly for assembly of the head region. Essential for efficient processing of 16S rRNA. May be needed both before and after RbfA during the maturation of 16S rRNA. It has affinity for free ribosomal 30S subunits but not for 70S ribosomes. This chain is Ribosome maturation factor RimM, found in Fusobacterium nucleatum subsp. nucleatum (strain ATCC 25586 / DSM 15643 / BCRC 10681 / CIP 101130 / JCM 8532 / KCTC 2640 / LMG 13131 / VPI 4355).